A 558-amino-acid polypeptide reads, in one-letter code: Deleted in azoospermia protein 2 (558 aa).

A compositionally biased stretch (polar residues) spans 1–10 (MSAANPETPN). The tract at residues 1–27 (MSAANPETPNSTISREASTQSSSAAAS) is disordered. Over residues 11–27 (STISREASTQSSSAAAS) the composition is skewed to low complexity. In terms of domain architecture, RRM spans 40 to 115 (NTVFVGGIDA…KKLKLGPAIR (76 aa)). DAZ domains lie at 167–190 (AYSAYPHSPGQVITGCQLLVYNYQ), 191–214 (EYPTYPDSAFQVTTGYQLPVYNYQ), 215–238 (PFPAYPRSPFQVTAGYQLPVYNYQ), 239–262 (AFPAYPNSPFQVATGYQFPVYNYQ), 263–286 (PFPAYPSSPFQVTAGYQLPVYNYQ), 287–310 (AFPAYPNSPFQVATGYQFPVYNYQ), 311–334 (AFPAYPNSPVQVTTGYQLPVYNYQ), 335–358 (AFPAYPNSPVQVTTGYQLPVYNYQ), 359–382 (AFPAYPSSPFQVTTGYQLPVYNYQ), 383–406 (AFPAYPSSPFQVTTGYQLPVYNYQ), 407–430 (AFPAYPSSPFQVTTGYQLPVYNYQ), 431–454 (AFPAYPSSPFQVTTGYQLPVYNYQ), 455–478 (AFPAYPSSPFQVTTGYQLPVYNYQ), 479–502 (AFPAYPSSPFQVTTGYQLPVYNYQ), and 503–526 (AFPAYPNSAVQVTTGYQFHVYNYQ).

The protein belongs to the RRM DAZ family. As to quaternary structure, forms a heterodimer with BOLL and DAZL. Interacts with PUM2, DAZAP1, DAZAP2, DZIP1 and DZIP3. Testis specific.

It is found in the cytoplasm. The protein resides in the nucleus. Its function is as follows. RNA-binding protein that plays an essential role in spermatogenesis. May act by binding to the 3'-UTR of mRNAs and regulating their translation. The protein is Deleted in azoospermia protein 2 (DAZ2) of Homo sapiens (Human).